The following is a 50-amino-acid chain: uncharacterized protein (50 aa).

This is an uncharacterized protein from His1 virus (isolate Australia/Victoria) (His1V).